A 447-amino-acid chain; its full sequence is Serine--tRNA ligase (447 aa).

Threonine 245–glutamate 247 lines the L-serine pocket. ATP-binding positions include arginine 276 to glutamate 278 and valine 292. An L-serine-binding site is contributed by glutamate 299. Glutamate 363–serine 366 contributes to the ATP binding site. L-serine is bound at residue threonine 398.

Belongs to the class-II aminoacyl-tRNA synthetase family. Type-1 seryl-tRNA synthetase subfamily. In terms of assembly, homodimer. The tRNA molecule binds across the dimer.

It is found in the cytoplasm. It carries out the reaction tRNA(Ser) + L-serine + ATP = L-seryl-tRNA(Ser) + AMP + diphosphate + H(+). It catalyses the reaction tRNA(Sec) + L-serine + ATP = L-seryl-tRNA(Sec) + AMP + diphosphate + H(+). Its pathway is aminoacyl-tRNA biosynthesis; selenocysteinyl-tRNA(Sec) biosynthesis; L-seryl-tRNA(Sec) from L-serine and tRNA(Sec): step 1/1. Catalyzes the attachment of serine to tRNA(Ser). Is also able to aminoacylate tRNA(Sec) with serine, to form the misacylated tRNA L-seryl-tRNA(Sec), which will be further converted into selenocysteinyl-tRNA(Sec). The protein is Serine--tRNA ligase of Pyrobaculum neutrophilum (strain DSM 2338 / JCM 9278 / NBRC 100436 / V24Sta) (Thermoproteus neutrophilus).